A 426-amino-acid polypeptide reads, in one-letter code: Amino acid transporter AVT1H (426 aa).

The next 11 membrane-spanning stretches (helical) occupy residues 34 to 54 (SFLH…QLSM), 55 to 75 (PYAV…FGIL), 110 to 130 (LIVC…YTIS), 148 to 168 (HFPA…SLWI), 182 to 202 (ILMS…GGVI), 215 to 235 (IPTV…FPNL), 248 to 268 (VSIV…ITGA), 292 to 312 (IALW…FAPL), 340 to 360 (LLLV…VLSL), 363 to 383 (SLVS…KICW), and 392 to 412 (AANL…SFES).

The protein belongs to the amino acid/polyamine transporter 2 family. Amino acid/auxin permease (AAAP) (TC 2.A.18.5) subfamily.

Its subcellular location is the membrane. The sequence is that of Amino acid transporter AVT1H from Arabidopsis thaliana (Mouse-ear cress).